A 227-amino-acid chain; its full sequence is uncharacterized protein (227 aa).

The next 2 helical transmembrane spans lie at 113–133 (IMLILMILSMILIIPLFFIVF) and 141–161 (FGICLTLLFYIAIFILTNGLI).

It is found in the membrane. This is an uncharacterized protein from Dictyostelium discoideum (Social amoeba).